Reading from the N-terminus, the 294-residue chain is ATP synthase gamma chain (294 aa).

It belongs to the ATPase gamma chain family. As to quaternary structure, F-type ATPases have 2 components, CF(1) - the catalytic core - and CF(0) - the membrane proton channel. CF(1) has five subunits: alpha(3), beta(3), gamma(1), delta(1), epsilon(1). CF(0) has three main subunits: a, b and c.

The protein localises to the cell inner membrane. Its function is as follows. Produces ATP from ADP in the presence of a proton gradient across the membrane. The gamma chain is believed to be important in regulating ATPase activity and the flow of protons through the CF(0) complex. The sequence is that of ATP synthase gamma chain from Paraburkholderia phytofirmans (strain DSM 17436 / LMG 22146 / PsJN) (Burkholderia phytofirmans).